The chain runs to 302 residues: L-aminoadipate-semialdehyde dehydrogenase-phosphopantetheinyl transferase (302 aa).

Residues arginine 44, 83 to 88 (RTGKGK), and 105 to 108 (NVSH) contribute to the CoA site. Mg(2+)-binding residues include aspartate 126 and glutamate 178. 178-182 (ESFIK) contributes to the CoA binding site.

This sequence belongs to the P-Pant transferase superfamily. AcpS family. In terms of assembly, monomer. Requires Mg(2+) as cofactor.

The protein resides in the cytoplasm. It is found in the cytosol. It carries out the reaction apo-[ACP] + CoA = holo-[ACP] + adenosine 3',5'-bisphosphate + H(+). The enzyme catalyses apo-[ACP] + acetyl-CoA = acetyl-[ACP] + adenosine 3',5'-bisphosphate + H(+). In terms of biological role, catalyzes the post-translational modification of target proteins by phosphopantetheine. Can transfer the 4'-phosphopantetheine moiety from coenzyme A, regardless of whether the CoA is presented in the free thiol form or as an acetyl thioester, to a serine residue of a broad range of acceptors. The protein is L-aminoadipate-semialdehyde dehydrogenase-phosphopantetheinyl transferase (aasdhppt) of Xenopus laevis (African clawed frog).